Consider the following 173-residue polypeptide: Mediator of RNA polymerase II transcription subunit 10 (173 aa).

The segment covering 1 to 10 (MVQQQQQSQQ) has biased composition (low complexity). Residues 1 to 42 (MVQQQQQSQQRMMELHERNDREKLARKTEKEREEERRKQEDD) form a disordered region. Over residues 13-42 (MELHERNDREKLARKTEKEREEERRKQEDD) the composition is skewed to basic and acidic residues.

Belongs to the Mediator complex subunit 10 family. In terms of assembly, component of the Mediator complex.

Its subcellular location is the nucleus. Functionally, component of the Mediator complex, a coactivator involved in the regulated transcription of nearly all RNA polymerase II-dependent genes. Mediator functions as a bridge to convey information from gene-specific regulatory proteins to the basal RNA polymerase II transcription machinery. Mediator is recruited to promoters by direct interactions with regulatory proteins and serves as a scaffold for the assembly of a functional preinitiation complex with RNA polymerase II and the general transcription factors. Required for germ cell development and for transcriptional activation of certain stage-specific inducible promoters. The protein is Mediator of RNA polymerase II transcription subunit 10 (mdt-10) of Caenorhabditis elegans.